Reading from the N-terminus, the 702-residue chain is Elongation factor G (702 aa).

One can recognise a tr-type G domain in the interval 8–290; sequence TRYRNIGISA…AVIEYLPAPT (283 aa). GTP-binding positions include 17–24, 88–92, and 142–145; these read AHIDAGKT, DTPGH, and NKMD.

The protein belongs to the TRAFAC class translation factor GTPase superfamily. Classic translation factor GTPase family. EF-G/EF-2 subfamily.

It localises to the cytoplasm. In terms of biological role, catalyzes the GTP-dependent ribosomal translocation step during translation elongation. During this step, the ribosome changes from the pre-translocational (PRE) to the post-translocational (POST) state as the newly formed A-site-bound peptidyl-tRNA and P-site-bound deacylated tRNA move to the P and E sites, respectively. Catalyzes the coordinated movement of the two tRNA molecules, the mRNA and conformational changes in the ribosome. This chain is Elongation factor G, found in Erwinia tasmaniensis (strain DSM 17950 / CFBP 7177 / CIP 109463 / NCPPB 4357 / Et1/99).